The sequence spans 345 residues: Ribonucleoside-diphosphate reductase small chain 2 (345 aa).

Met1 bears the N-acetylmethionine mark. The active site involves Tyr131. Phosphoserine occurs at positions 169 and 332. Position 334 is a phosphothreonine (Thr334). Ser336 carries the post-translational modification Phosphoserine. A Glycyl lysine isopeptide (Lys-Gly) (interchain with G-Cter in ubiquitin) cross-link involves residue Lys337.

This sequence belongs to the ribonucleoside diphosphate reductase small chain family. In terms of assembly, heterotetramer of two large (R1) and two small (R2) subunits. S.cerevisiae has two different R1 subunits (RNR1 and RNR3) and two different R2 subunits (RNR2 and RNR4). The functional form of the small subunits is a RNR2-RNR4 heterodimer, where RNR2 provides the iron-radical center and RNR4 is required for proper folding of RNR2 and assembly with the large subunits. Under normal growth conditions, the active form of the large subunits is a homodimer of the constitutively expressed RNR1. In damaged cells or cells arrested for DNA synthesis, the reductase consists of multiple species because of the association of the small subunits (RNR2-RNR4) with either the RNR1 homodimer or a heterodimer of RNR1 and the damage-inducible RNR3. Interacts with DIF1.

Its subcellular location is the nucleus. The catalysed reaction is a 2'-deoxyribonucleoside 5'-diphosphate + [thioredoxin]-disulfide + H2O = a ribonucleoside 5'-diphosphate + [thioredoxin]-dithiol. In terms of biological role, provides the precursors necessary for DNA synthesis. Catalyzes the biosynthesis of deoxyribonucleotides from the corresponding ribonucleotides. RNR4 is required for proper folding of RNR2 and assembly with the large subunits. The chain is Ribonucleoside-diphosphate reductase small chain 2 (RNR4) from Saccharomyces cerevisiae (strain ATCC 204508 / S288c) (Baker's yeast).